The sequence spans 690 residues: Long-chain fatty acid transport protein 5 (690 aa).

At 1 to 30 (MGVRQQLALLLLLLLLLWGLGQPVWPVAVA) the chain is on the cytoplasmic side. Transmembrane regions (helical) follow at residues 31-51 (LTLRWLLGDPTCCVLLGLAML) and 56-76 (LGPWVPHGLSLAAAALALTLL). Over 77–690 (PARLPPGLRW…QAVCEGTWRL (614 aa)) the chain is Cytoplasmic. 292-303 (FIYTSGTTGLPK) lines the AMP pocket. Ser501 is modified (phosphoserine).

The protein belongs to the ATP-dependent AMP-binding enzyme family. In terms of tissue distribution, predominantly expressed in liver.

The protein localises to the endoplasmic reticulum membrane. The protein resides in the microsome. It localises to the cell membrane. The enzyme catalyses a fatty acid(in) = a fatty acid(out). It catalyses the reaction cholate + ATP + CoA = choloyl-CoA + AMP + diphosphate. It carries out the reaction chenodeoxycholate + ATP + CoA = chenodeoxycholoyl-CoA + AMP + diphosphate. The catalysed reaction is deoxycholate + ATP + CoA = deoxycholoyl-CoA + AMP + diphosphate. The enzyme catalyses lithocholate + ATP + CoA = lithocholoyl-CoA + AMP + diphosphate. It catalyses the reaction (25R)-3alpha,7alpha,12alpha-trihydroxy-5beta-cholestan-26-oate + ATP + CoA = (25R)-3alpha,7alpha,12alpha-trihydroxy-5beta-cholestan-26-oyl-CoA + AMP + diphosphate. It carries out the reaction a very long-chain fatty acid + ATP + CoA = a very long-chain fatty acyl-CoA + AMP + diphosphate. The catalysed reaction is tetracosanoate + ATP + CoA = tetracosanoyl-CoA + AMP + diphosphate. The enzyme catalyses hexacosanoate + ATP + CoA = hexacosanoyl-CoA + AMP + diphosphate. It catalyses the reaction a long-chain fatty acid + ATP + CoA = a long-chain fatty acyl-CoA + AMP + diphosphate. It carries out the reaction octadecanoate + ATP + CoA = octadecanoyl-CoA + AMP + diphosphate. The catalysed reaction is eicosanoate + ATP + CoA = eicosanoyl-CoA + AMP + diphosphate. Its activity is regulated as follows. 3-alpha,7-alpha,12-alpha-trihydroxy-5-beta-cholestanate (THCA) inhibits the activation of cholate. In terms of biological role, may mediate the import of long-chain fatty acids (LCFA) by facilitating their transport across cell membranes. Also catalyzes the ATP-dependent formation of fatty acyl-CoA using LCFA and very-long-chain fatty acids (VLCFA) as substrates. Mainly functions as a bile acyl-CoA synthetase catalyzing the activation of bile acids via ATP-dependent formation of bile acid CoA thioesters which is necessary for their subsequent conjugation with glycine or taurine. Both primary bile acids (cholic acid and chenodeoxycholic acid) and secondary bile acids (deoxycholic acid and lithocholic acid) are the principal substrates. In vitro, activates 3-alpha,7-alpha,12-alpha-trihydroxy-5-beta-cholestanate ((25R)-3alpha,7alpha,12alpha-trihydroxy-5beta-cholestan-26-oate or THCA), the C27 precursor of cholic acid deriving from the de novo synthesis from cholesterol. Plays an important role in hepatic fatty acid uptake and bile acid reconjugation and recycling but not in de novo synthesis of bile acids. The chain is Long-chain fatty acid transport protein 5 (SLC27A5) from Homo sapiens (Human).